We begin with the raw amino-acid sequence, 193 residues long: NADH-quinone oxidoreductase subunit B (193 aa).

[4Fe-4S] cluster is bound by residues Cys-72, Cys-73, Cys-137, and Cys-167.

It belongs to the complex I 20 kDa subunit family. As to quaternary structure, NDH-1 is composed of 14 different subunits. Subunits NuoB, C, D, E, F, and G constitute the peripheral sector of the complex. The cofactor is [4Fe-4S] cluster.

It localises to the cell inner membrane. The catalysed reaction is a quinone + NADH + 5 H(+)(in) = a quinol + NAD(+) + 4 H(+)(out). NDH-1 shuttles electrons from NADH, via FMN and iron-sulfur (Fe-S) centers, to quinones in the respiratory chain. The immediate electron acceptor for the enzyme in this species is believed to be ubiquinone. Couples the redox reaction to proton translocation (for every two electrons transferred, four hydrogen ions are translocated across the cytoplasmic membrane), and thus conserves the redox energy in a proton gradient. The sequence is that of NADH-quinone oxidoreductase subunit B from Caulobacter vibrioides (strain ATCC 19089 / CIP 103742 / CB 15) (Caulobacter crescentus).